The following is a 1417-amino-acid chain: DNA-directed RNA polymerase subunit beta' (1417 aa).

Zn(2+) contacts are provided by cysteine 71, cysteine 73, cysteine 86, and cysteine 89. The Mg(2+) site is built by aspartate 461, aspartate 463, and aspartate 465. The Zn(2+) site is built by cysteine 815, cysteine 889, cysteine 896, and cysteine 899.

This sequence belongs to the RNA polymerase beta' chain family. The RNAP catalytic core consists of 2 alpha, 1 beta, 1 beta' and 1 omega subunit. When a sigma factor is associated with the core the holoenzyme is formed, which can initiate transcription. The cofactor is Mg(2+). Zn(2+) serves as cofactor.

It catalyses the reaction RNA(n) + a ribonucleoside 5'-triphosphate = RNA(n+1) + diphosphate. DNA-dependent RNA polymerase catalyzes the transcription of DNA into RNA using the four ribonucleoside triphosphates as substrates. The protein is DNA-directed RNA polymerase subunit beta' of Pasteurella multocida (strain Pm70).